The primary structure comprises 231 residues: Large ribosomal subunit protein uL1 (231 aa).

The protein belongs to the universal ribosomal protein uL1 family. Part of the 50S ribosomal subunit.

Its function is as follows. Binds directly to 23S rRNA. The L1 stalk is quite mobile in the ribosome, and is involved in E site tRNA release. In terms of biological role, protein L1 is also a translational repressor protein, it controls the translation of the L11 operon by binding to its mRNA. The polypeptide is Large ribosomal subunit protein uL1 (Kosmotoga olearia (strain ATCC BAA-1733 / DSM 21960 / TBF 19.5.1)).